We begin with the raw amino-acid sequence, 166 residues long: Ribosome maturation factor RimM (166 aa).

Positions 91 to 165 (DDEFYHADLI…RIVADPPEGL (75 aa)) constitute a PRC barrel domain.

Belongs to the RimM family. As to quaternary structure, binds ribosomal protein uS19.

Its subcellular location is the cytoplasm. An accessory protein needed during the final step in the assembly of 30S ribosomal subunit, possibly for assembly of the head region. Essential for efficient processing of 16S rRNA. May be needed both before and after RbfA during the maturation of 16S rRNA. It has affinity for free ribosomal 30S subunits but not for 70S ribosomes. The sequence is that of Ribosome maturation factor RimM from Dinoroseobacter shibae (strain DSM 16493 / NCIMB 14021 / DFL 12).